The primary structure comprises 251 residues: Probable transcriptional regulatory protein MRA_2631 (251 aa).

The protein belongs to the TACO1 family.

It is found in the cytoplasm. The protein is Probable transcriptional regulatory protein MRA_2631 of Mycobacterium tuberculosis (strain ATCC 25177 / H37Ra).